A 1227-amino-acid chain; its full sequence is Protein transport protein Sec31A (1227 aa).

7 WD repeats span residues 4-47 (KEID…EIFE), 64-111 (SSAH…AGDT), 120-160 (KHTG…TPMT), 166-206 (QPLE…PIIK), 209-254 (DHNN…SPLR), 258-298 (SHTR…VLYE), and 301-342 (TNMQ…DGLR). Residues 397 to 430 (SFSFGGKLVTFENAKPQQQPGIDQQPQHHYVYVS) form a WD 8; interaction with SEC13 repeat. Disordered stretches follow at residues 804-875 (EAIK…YSQA), 905-1008 (QPVA…GWND), and 1040-1075 (ADPQAQMQQPPAAPVGTPSFQPQQLSTGQQAPLGPY). Residues 905 to 924 (QPVAAPASASYPSPASNTNP) show a composition bias toward low complexity. The span at 925–945 (PYLPAAQPVPSPLYPGQPQPS) shows a compositional bias: pro residues. Positions 995-1006 (PASQRTGPQNGW) are enriched in polar residues. Residues 1040-1049 (ADPQAQMQQP) are compositionally biased toward low complexity. The segment covering 1057–1069 (PSFQPQQLSTGQQ) has biased composition (polar residues).

The protein belongs to the WD repeat SEC31 family. COPII is composed of at least 5 proteins: the SEC23/24 complex, the SEC13/31 complex and SAR1. SEC13 and SEC31 make a 2:2 tetramer that forms the edge element of the COPII outer coat. The tetramer self-assembles in multiple copies to form the complete polyhedral cage. Interacts (via WD 8) with SEC13.

It localises to the cytoplasm. The protein localises to the cytoplasmic vesicle. It is found in the COPII-coated vesicle membrane. Its subcellular location is the endoplasmic reticulum membrane. Its function is as follows. Component of the coat protein complex II (COPII) which promotes the formation of transport vesicles from the endoplasmic reticulum (ER). The coat has two main functions, the physical deformation of the endoplasmic reticulum membrane into vesicles and the selection of cargo molecules. The polypeptide is Protein transport protein Sec31A (SEC31A) (Gallus gallus (Chicken)).